The following is a 196-amino-acid chain: Nucleoside triphosphate pyrophosphatase (196 aa).

The Proton acceptor role is filled by aspartate 73.

Belongs to the Maf family. A divalent metal cation is required as a cofactor.

The protein resides in the cytoplasm. It carries out the reaction a ribonucleoside 5'-triphosphate + H2O = a ribonucleoside 5'-phosphate + diphosphate + H(+). The enzyme catalyses a 2'-deoxyribonucleoside 5'-triphosphate + H2O = a 2'-deoxyribonucleoside 5'-phosphate + diphosphate + H(+). In terms of biological role, nucleoside triphosphate pyrophosphatase. May have a dual role in cell division arrest and in preventing the incorporation of modified nucleotides into cellular nucleic acids. In Maricaulis maris (strain MCS10) (Caulobacter maris), this protein is Nucleoside triphosphate pyrophosphatase.